Consider the following 273-residue polypeptide: Tyrosinase (273 aa).

A signal peptide spans 1–18 (MCLLALGFLLGILQPASG). Residues N86 and N169 are each glycosylated (N-linked (GlcNAc...) asparagine). Cu cation is bound by residues H180, H202, and H211. Residue N230 is glycosylated (N-linked (GlcNAc...) asparagine).

The protein belongs to the tyrosinase family. Cu(2+) serves as cofactor.

It is found in the melanosome membrane. The catalysed reaction is 2 L-dopa + O2 = 2 L-dopaquinone + 2 H2O. It carries out the reaction L-tyrosine + O2 = L-dopaquinone + H2O. This is a copper-containing oxidase that functions in the formation of pigments such as melanins and other polyphenolic compounds. The polypeptide is Tyrosinase (TYR) (Pelodiscus sinensis (Chinese softshell turtle)).